The chain runs to 153 residues: Ubiquitin/ISG15-conjugating enzyme E2 L6 (153 aa).

In terms of domain architecture, UBC core spans 2–149 (MASMRVVKEL…AEEFTLRFGV (148 aa)). Cys86 (glycyl thioester intermediate) is an active-site residue.

This sequence belongs to the ubiquitin-conjugating enzyme family. As to quaternary structure, interacts with RNF19A, RNF19B and RNF144B. Interacts with FLT3 (tyrosine phosphorylated). Post-translationally, ISGylated. Present in natural killer cells (at protein level).

It catalyses the reaction S-ubiquitinyl-[E1 ubiquitin-activating enzyme]-L-cysteine + [E2 ubiquitin-conjugating enzyme]-L-cysteine = [E1 ubiquitin-activating enzyme]-L-cysteine + S-ubiquitinyl-[E2 ubiquitin-conjugating enzyme]-L-cysteine.. The protein operates within protein modification; protein ubiquitination. Catalyzes the covalent attachment of ubiquitin or ISG15 to other proteins. Functions in the E6/E6-AP-induced ubiquitination of p53/TP53. Promotes ubiquitination and subsequent proteasomal degradation of FLT3. The sequence is that of Ubiquitin/ISG15-conjugating enzyme E2 L6 (UBE2L6) from Homo sapiens (Human).